The sequence spans 309 residues: Elongation factor Ts (309 aa).

An involved in Mg(2+) ion dislocation from EF-Tu region spans residues 82-85 (TDFV).

Belongs to the EF-Ts family.

The protein resides in the cytoplasm. Functionally, associates with the EF-Tu.GDP complex and induces the exchange of GDP to GTP. It remains bound to the aminoacyl-tRNA.EF-Tu.GTP complex up to the GTP hydrolysis stage on the ribosome. The polypeptide is Elongation factor Ts (Rickettsia africae (strain ESF-5)).